Reading from the N-terminus, the 523-residue chain is Nondiscriminating glutamyl-tRNA synthetase EARS2, mitochondrial (523 aa).

The transit peptide at 1–41 directs the protein to the mitochondrion; the sequence is MAALLRRLLQRERPSAASGRPVGRREANLGTDAGVAVRVRF. L-glutamate is bound at residue 40–42; the sequence is RFA. The 'HIGH' region motif lies at 45–53; the sequence is PTGFLHLGG. ATP is bound at residue histidine 50. L-glutamate is bound by residues glutamate 76, 228-232, and arginine 246; that span reads YHLAC. ATP is bound at residue glutamate 249. An N6-succinyllysine modification is found at lysine 256. An ATP-binding site is contributed by 284–288; that stretch reads KLSKR. The 'KMSKS' region signature appears at 284–288; it reads KLSKR. Lysine 486 carries the post-translational modification N6-acetyllysine.

It belongs to the class-I aminoacyl-tRNA synthetase family. Glutamate--tRNA ligase type 1 subfamily.

The protein localises to the mitochondrion matrix. The enzyme catalyses tRNA(Glx) + L-glutamate + ATP = L-glutamyl-tRNA(Glx) + AMP + diphosphate. It catalyses the reaction tRNA(Glu) + L-glutamate + ATP = L-glutamyl-tRNA(Glu) + AMP + diphosphate. The catalysed reaction is tRNA(Gln) + L-glutamate + ATP = L-glutamyl-tRNA(Gln) + AMP + diphosphate. Non-discriminating glutamyl-tRNA synthetase that catalyzes aminoacylation of both mitochondrial tRNA(Glu) and tRNA(Gln) and participates in RNA aminoacylation for mitochondrial protein translation. Attachs glutamate to tRNA(Glu) or tRNA(Gln) in a two-step reaction: glutamate is first activated by ATP to form Glu-AMP and then transferred to the acceptor end of tRNA(Glu) or tRNA(Gln). In vitro, cytoplasmic tRNA(Gln) is slightly glutamylated, but with low activity. In Homo sapiens (Human), this protein is Nondiscriminating glutamyl-tRNA synthetase EARS2, mitochondrial.